The sequence spans 165 residues: Histone H1-like protein HC2 (165 aa).

2 stretches are compositionally biased toward basic residues: residues 1 to 50 (MLGV…KTVA) and 59 to 80 (PVAKKATAKKAPVRKVAAKKTV). Residues 1–80 (MLGVQKKRST…VRKVAAKKTV (80 aa)) form a disordered region.

Belongs to the histone H1/H5 family. HCT subfamily.

In terms of biological role, might have a role in establishing the nucleoid structure of elementary bodies. This chain is Histone H1-like protein HC2 (hctB), found in Chlamydia trachomatis.